Here is a 75-residue protein sequence, read N- to C-terminus: DNA-directed RNA polymerase subunit omega (75 aa).

The protein belongs to the RNA polymerase subunit omega family. In cyanobacteria the RNAP catalytic core is composed of 2 alpha, 1 beta, 1 beta', 1 gamma and 1 omega subunit. When a sigma factor is associated with the core the holoenzyme is formed, which can initiate transcription.

It carries out the reaction RNA(n) + a ribonucleoside 5'-triphosphate = RNA(n+1) + diphosphate. Promotes RNA polymerase assembly. Latches the N- and C-terminal regions of the beta' subunit thereby facilitating its interaction with the beta and alpha subunits. This chain is DNA-directed RNA polymerase subunit omega, found in Synechococcus sp. (strain CC9311).